Consider the following 226-residue polypeptide: Cytidylate kinase (226 aa).

Position 10 to 18 (Gly-10 to Thr-18) interacts with ATP.

It belongs to the cytidylate kinase family. Type 1 subfamily.

Its subcellular location is the cytoplasm. The enzyme catalyses CMP + ATP = CDP + ADP. The catalysed reaction is dCMP + ATP = dCDP + ADP. The protein is Cytidylate kinase of Streptococcus equi subsp. equi (strain 4047).